The chain runs to 481 residues: Glutamine synthetase (481 aa).

Residues 22-106 enclose the GS beta-grasp domain; the sequence is NEVEFVDFRF…VFCDVYDVYK (85 aa). Residues 114–481 form the GS catalytic domain; sequence PRSIAKKALQ…PFEFITTYSC (368 aa). Glu-139, Glu-141, Glu-223, and Glu-230 together coordinate Mg(2+). L-glutamate-binding positions include 274–275 and Gly-275; that span reads NG. His-279 is a Mg(2+) binding site. Residues 281–283 and Ser-283 each bind ATP; that span reads HVS. 3 residues coordinate L-glutamate: Arg-331, Glu-337, and Arg-349. Positions 349 and 354 each coordinate ATP. Glu-367 contributes to the Mg(2+) binding site. Arg-369 provides a ligand contact to L-glutamate.

It belongs to the glutamine synthetase family. As to quaternary structure, oligomer of 12 subunits arranged in the form of two hexameric ring. Mg(2+) serves as cofactor.

The protein resides in the cytoplasm. The enzyme catalyses L-glutamate + NH4(+) + ATP = L-glutamine + ADP + phosphate + H(+). Its activity is regulated as follows. The activity of this enzyme could be controlled by adenylation under conditions of abundant glutamine. Its function is as follows. Catalyzes the ATP-dependent biosynthesis of glutamine from glutamate and ammonia. The chain is Glutamine synthetase from Helicobacter pylori (strain ATCC 700392 / 26695) (Campylobacter pylori).